The primary structure comprises 360 residues: Alanine racemase (360 aa).

Residue Lys-36 is the Proton acceptor; specific for D-alanine of the active site. An N6-(pyridoxal phosphate)lysine modification is found at Lys-36. Arg-132 is a binding site for substrate. Tyr-256 (proton acceptor; specific for L-alanine) is an active-site residue. A substrate-binding site is contributed by Met-304.

The protein belongs to the alanine racemase family. Pyridoxal 5'-phosphate is required as a cofactor.

It catalyses the reaction L-alanine = D-alanine. The protein operates within amino-acid biosynthesis; D-alanine biosynthesis; D-alanine from L-alanine: step 1/1. Functionally, catalyzes the interconversion of L-alanine and D-alanine. May also act on other amino acids. In Haemophilus influenzae (strain ATCC 51907 / DSM 11121 / KW20 / Rd), this protein is Alanine racemase (alr).